A 312-amino-acid chain; its full sequence is Tetraspanin-17 (312 aa).

4 helical membrane-spanning segments follow: residues Ile17–Leu37, Val64–Val84, Phe89–Gly109, and Ile274–Leu294.

It belongs to the tetraspanin (TM4SF) family. In terms of tissue distribution, expressed in dopaminergic neurons, head muscles, vulva and spermatheca.

It is found in the cell membrane. Its subcellular location is the cell projection. It localises to the dendrite. The protein localises to the axon. Functionally, protects dopaminergic neurons against oxidative stress-induced neurodegeneration. May act partly via dopamine receptor dop-2 to negatively regulate dopamine reuptake transporter dat-1 activity. Also plays a role in modulating behaviors linked to dopamine signaling. Confers protection against oxidative stress in the whole body. The sequence is that of Tetraspanin-17 from Caenorhabditis elegans.